The chain runs to 70 residues: Cold shock-like protein CspH (70 aa).

Residues 7-67 (GIVKTFDRKS…GLRGPTAANV (61 aa)) form the CSD domain.

Its subcellular location is the cytoplasm. The protein is Cold shock-like protein CspH (cspH) of Escherichia coli O6:H1 (strain CFT073 / ATCC 700928 / UPEC).